The following is a 1097-amino-acid chain: DNA-directed RNA polymerase subunit beta (1097 aa).

The interval 1073–1097 (DVNPRRSTPSRPTYESLGVADYDED) is disordered.

It belongs to the RNA polymerase beta chain family. In cyanobacteria the RNAP catalytic core is composed of 2 alpha, 1 beta, 1 beta', 1 gamma and 1 omega subunit. When a sigma factor is associated with the core the holoenzyme is formed, which can initiate transcription.

It carries out the reaction RNA(n) + a ribonucleoside 5'-triphosphate = RNA(n+1) + diphosphate. In terms of biological role, DNA-dependent RNA polymerase catalyzes the transcription of DNA into RNA using the four ribonucleoside triphosphates as substrates. The polypeptide is DNA-directed RNA polymerase subunit beta (Synechococcus sp. (strain RCC307)).